We begin with the raw amino-acid sequence, 502 residues long: Probable malate:quinone oxidoreductase (502 aa).

It belongs to the MQO family. FAD is required as a cofactor.

The enzyme catalyses (S)-malate + a quinone = a quinol + oxaloacetate. It functions in the pathway carbohydrate metabolism; tricarboxylic acid cycle; oxaloacetate from (S)-malate (quinone route): step 1/1. The polypeptide is Probable malate:quinone oxidoreductase (Synechococcus sp. (strain CC9605)).